The sequence spans 303 residues: MMSESNKQQAVNKLTEIVANFTAMISTRMPDDVVDKLKQLKDAETSSMGKIIYHTMFDNMQKAIDLNRPACQDTGEIMFFVKVGSRFPLLGELQSILKQAVEEATVKAPLRHNAVEIFDEVNTGKNTGSGVPWVTWDIIPDNDDAEIEVYMAGGGCTLPGRSKVLMPSEGYEGVVKFVFENISTLAVNACPPVLVGVGIATSVETAAVLSRKAILRPIGSRHPNPKAAELELRLEEGLNRLGIGPQGLTGNSSVMGVHIESAARHPSTIGVAVSTGCWAHRRGTLLVHADLTFENLSHTRSAL.

Iron-sulfur cluster-binding residues include Cys-71, Cys-190, and Cys-277.

The protein belongs to the class-I fumarase family. Tetramer of two alpha and two beta subunits. Iron-sulfur cluster is required as a cofactor.

It carries out the reaction (2R,3R)-tartrate = oxaloacetate + H2O. In Escherichia coli O6:K15:H31 (strain 536 / UPEC), this protein is L(+)-tartrate dehydratase subunit alpha (ttdA).